We begin with the raw amino-acid sequence, 552 residues long: DnaJ homolog subfamily C member 1 (552 aa).

The signal sequence occupies residues 1-43 (MWVPGFGSARLPQRRRSGLESSSVRPLWLLLLFLLAAVRPVRA). Over 44–149 (WESGDLELFD…RRVRKMSNAE (106 aa)) the chain is Lumenal. The region spanning 56 to 129 (EEVQLNFYEF…RYDDVLINGL (74 aa)) is the J domain. A helical membrane pass occupies residues 150–170 (LALLLFIILTVGHYAVVWSIY). The Cytoplasmic segment spans residues 171–552 (LEKQLDELLG…LVQKKKQAKS (382 aa)). An SANT 1 domain is found at 323-377 (RQAPEWTEEDLSQLTRSMVKFPGGTPGRWDKIAHELGRSVTDVTTKAKELKDSVT). The segment at 370-495 (KELKDSVTSS…ERTRAAEEAW (126 aa)) is disordered. Residue Ser-379 is modified to Phosphoserine. Over residues 419–431 (MEDEEHEAAEGEQ) the composition is skewed to acidic residues. Basic and acidic residues predominate over residues 453 to 470 (TRVEPEEKLRGKRQKDFD). A phosphoserine mark is found at Ser-477 and Ser-478. The segment covering 480–492 (EEKQRKERTRAAE) has biased composition (basic and acidic residues). Residues 490 to 545 (AAEEAWTQSQQKLLELALQQYPKGASDRWDKIAKCVPSKSKEDCIARYKLLVELVQ) enclose the SANT 2 domain.

As to quaternary structure, interacts (via J domain) with HSPA5. Interacts (via cytosolic domain) with ribosomes. Interacts (via SANT 2 domain) with SERPINA3; the interaction delays the formation of the covalent inhibitory complex SERPINA3-chymotrypsin, but does not alter the catalytic activity of SERPINA3. Interacts (via SANT 2 domain) with ITIH4 (via C-terminus); the interaction protects ITIH4 against in vitro cleavage by kallikrein. As to expression, widely expressed.

The protein localises to the endoplasmic reticulum membrane. It localises to the nucleus membrane. It is found in the microsome membrane. Functionally, may modulate protein synthesis. The chain is DnaJ homolog subfamily C member 1 (Dnajc1) from Mus musculus (Mouse).